Reading from the N-terminus, the 221-residue chain is Molybdenum cofactor guanylyltransferase (221 aa).

GTP contacts are provided by residues 18–20, K35, N63, D81, and D112; that span reads IAG. Position 112 (D112) interacts with Mg(2+).

Belongs to the MobA family. As to quaternary structure, monomer. Requires Mg(2+) as cofactor.

Its subcellular location is the cytoplasm. The enzyme catalyses Mo-molybdopterin + GTP + H(+) = Mo-molybdopterin guanine dinucleotide + diphosphate. Its function is as follows. Transfers a GMP moiety from GTP to Mo-molybdopterin (Mo-MPT) cofactor (Moco or molybdenum cofactor) to form Mo-molybdopterin guanine dinucleotide (Mo-MGD) cofactor. In Brucella melitensis biotype 2 (strain ATCC 23457), this protein is Molybdenum cofactor guanylyltransferase.